Reading from the N-terminus, the 258-residue chain is Ribosomal RNA large subunit methyltransferase E (258 aa).

Residues Gly58, Trp60, Asp78, Asp96, and Asp120 each contribute to the S-adenosyl-L-methionine site. Residue Lys160 is the Proton acceptor of the active site.

It belongs to the class I-like SAM-binding methyltransferase superfamily. RNA methyltransferase RlmE family.

Its subcellular location is the cytoplasm. The catalysed reaction is uridine(2552) in 23S rRNA + S-adenosyl-L-methionine = 2'-O-methyluridine(2552) in 23S rRNA + S-adenosyl-L-homocysteine + H(+). Its function is as follows. Specifically methylates the uridine in position 2552 of 23S rRNA at the 2'-O position of the ribose in the fully assembled 50S ribosomal subunit. The chain is Ribosomal RNA large subunit methyltransferase E from Methanococcus maripaludis (strain DSM 14266 / JCM 13030 / NBRC 101832 / S2 / LL).